Consider the following 346-residue polypeptide: UPF0421 protein OB2406 (346 aa).

Transmembrane regions (helical) follow at residues 16-36 (IAVLLTAYICEWIGWSPVFAV), 55-75 (LIRFPASAIGAAYAVLFIALF), 102-122 (LLVATITSVAMVDVIHSNYVM), and 128-148 (LFTTTIGLSVSTLVNMFLLPP).

It belongs to the UPF0421 family.

It is found in the cell membrane. The polypeptide is UPF0421 protein OB2406 (Oceanobacillus iheyensis (strain DSM 14371 / CIP 107618 / JCM 11309 / KCTC 3954 / HTE831)).